The sequence spans 350 residues: Heat-inducible transcription repressor HrcA (350 aa).

It belongs to the HrcA family.

In terms of biological role, negative regulator of class I heat shock genes (grpE-dnaK-dnaJ and groELS operons). Prevents heat-shock induction of these operons. In Methylococcus capsulatus (strain ATCC 33009 / NCIMB 11132 / Bath), this protein is Heat-inducible transcription repressor HrcA.